The following is a 122-amino-acid chain: Cytochrome c-556 (122 aa).

Residues M11, C111, C114, and H115 each coordinate heme. Heme c-binding residues include M11, C111, C114, and H115.

In terms of assembly, monomer. Post-translationally, binds 1 heme c group covalently per subunit.

Low-spin monoheme cytochrome c. This is Cytochrome c-556 from Agrobacterium tumefaciens (strain B2A).